Consider the following 183-residue polypeptide: Small ribosomal subunit protein bS16 (183 aa).

A compositionally biased stretch (basic and acidic residues) spans 149–161; sequence EKKAAEAAAKAEA. Residues 149-183 form a disordered region; that stretch reads EKKAAEAAAKAEAEAANAPAEEAPAAEATEAPAEA. The segment covering 162-183 has biased composition (low complexity); that stretch reads EAANAPAEEAPAAEATEAPAEA.

It belongs to the bacterial ribosomal protein bS16 family.

The polypeptide is Small ribosomal subunit protein bS16 (Phocaeicola vulgatus (strain ATCC 8482 / DSM 1447 / JCM 5826 / CCUG 4940 / NBRC 14291 / NCTC 11154) (Bacteroides vulgatus)).